Consider the following 311-residue polypeptide: tRNA dimethylallyltransferase (311 aa).

16–23 (GATASGKS) is a binding site for ATP. 18–23 (TASGKS) lines the substrate pocket. 2 interaction with substrate tRNA regions span residues 41–44 (DSRQ) and 165–169 (QRLIR).

This sequence belongs to the IPP transferase family. In terms of assembly, monomer. It depends on Mg(2+) as a cofactor.

The enzyme catalyses adenosine(37) in tRNA + dimethylallyl diphosphate = N(6)-dimethylallyladenosine(37) in tRNA + diphosphate. In terms of biological role, catalyzes the transfer of a dimethylallyl group onto the adenine at position 37 in tRNAs that read codons beginning with uridine, leading to the formation of N6-(dimethylallyl)adenosine (i(6)A). The protein is tRNA dimethylallyltransferase of Chlorobium chlorochromatii (strain CaD3).